Consider the following 30-residue polypeptide: 2S seed storage-like protein (30 aa).

It belongs to the 2S seed storage albumins family. The mature protein is a heterodimer of a small and a large chain linked by 2 disulfide bonds. As to expression, extracted from castor bean.

This is a 2S seed storage protein. Inhibits spore germination in R.solani and F.oxysporum. Exhibits anti-trypsin activity. The polypeptide is 2S seed storage-like protein (Ricinus communis (Castor bean)).